A 340-amino-acid chain; its full sequence is Ketol-acid reductoisomerase (NADP(+)) (340 aa).

One can recognise a KARI N-terminal Rossmann domain in the interval 3–182; the sequence is VTMYYEDDVE…GCARVGIIET (180 aa). NADP(+) is bound by residues 26–29, R49, S53, and 83–86; these read YGSQ and DELQ. H108 is an active-site residue. G134 contacts NADP(+). The region spanning 183–328 is the KARI C-terminal knotted domain; the sequence is TFKEETEEDL…AELRKAMPFT (146 aa). Mg(2+) contacts are provided by D191, E195, E227, and E231. Residue S252 coordinates substrate.

This sequence belongs to the ketol-acid reductoisomerase family. Mg(2+) is required as a cofactor.

It carries out the reaction (2R)-2,3-dihydroxy-3-methylbutanoate + NADP(+) = (2S)-2-acetolactate + NADPH + H(+). It catalyses the reaction (2R,3R)-2,3-dihydroxy-3-methylpentanoate + NADP(+) = (S)-2-ethyl-2-hydroxy-3-oxobutanoate + NADPH + H(+). Its pathway is amino-acid biosynthesis; L-isoleucine biosynthesis; L-isoleucine from 2-oxobutanoate: step 2/4. It participates in amino-acid biosynthesis; L-valine biosynthesis; L-valine from pyruvate: step 2/4. Involved in the biosynthesis of branched-chain amino acids (BCAA). Catalyzes an alkyl-migration followed by a ketol-acid reduction of (S)-2-acetolactate (S2AL) to yield (R)-2,3-dihydroxy-isovalerate. In the isomerase reaction, S2AL is rearranged via a Mg-dependent methyl migration to produce 3-hydroxy-3-methyl-2-ketobutyrate (HMKB). In the reductase reaction, this 2-ketoacid undergoes a metal-dependent reduction by NADPH to yield (R)-2,3-dihydroxy-isovalerate. This is Ketol-acid reductoisomerase (NADP(+)) from Lactococcus lactis subsp. lactis (strain IL1403) (Streptococcus lactis).